Consider the following 350-residue polypeptide: MSEQIPKTQKAVVFDTNGGQLVYKDYPVPTPKPNELLIHVKYSGVCHTDLHARKGDWPLATKLPLVGGHEGAGVVVGMGENVKGWKIGDFAGIKWLNGSCMSCEFCQQGAEPNCGEADLSGYTHDGSFEQYATADAVQAAKIPAGTDLANVAPILCAGVTVYKALKTADLAAGQWVAISGAGGGLGSLAVQYARAMGLRVVAIDGGDEKGEFVKSLGAEAYVDFTKDKDIVEAVKKATDGGPHGAINVSVSEKAIDQSVEYVRPLGKVVLVGLPAHAKVTAPVFDAVVKSIEIKGSYVGNRKDTAEAIDFFSRGLIKCPIKIVGLSDLPEVFKLMEEGKILGRYVLDTSK.

Zn(2+)-binding residues include Cys-46, His-69, Cys-100, Cys-103, Cys-106, Cys-114, and Cys-156. NAD(+) contacts are provided by residues 180–186, Asp-204, Lys-209, 271–273, and Arg-343; these read GAGGGLG and VGL.

The protein belongs to the zinc-containing alcohol dehydrogenase family. Homotetramer. The cofactor is Zn(2+).

It localises to the cytoplasm. The catalysed reaction is a primary alcohol + NAD(+) = an aldehyde + NADH + H(+). It catalyses the reaction a secondary alcohol + NAD(+) = a ketone + NADH + H(+). This chain is Alcohol dehydrogenase 1 (ADH1), found in Candida albicans (Yeast).